The sequence spans 257 residues: Protein CUSTOS (257 aa).

A compositionally biased stretch (low complexity) spans 1 to 11 (MSDLESSSSSS). Positions 1–72 (MSDLESSSSS…HEQDGNELQT (72 aa)) are disordered. Over residues 32–41 (QRPRGPEKPG) the composition is skewed to basic and acidic residues. At Ser55 the chain carries Phosphoserine. Position 73 is a phosphothreonine (Thr73). Disordered stretches follow at residues 120–157 (FTSI…RRCR) and 170–257 (SAIH…VPSN). 2 stretches are compositionally biased toward basic residues: residues 180 to 190 (KKKKRKLKKKA) and 227 to 237 (TKKKKRKKKTK). Residues 228 to 236 (KKKKRKKKT) carry the Nucleolar localization signal (NLS) motif.

Belongs to the CUSTOS family.

The protein localises to the nucleus envelope. In terms of biological role, plays a role in the regulation of Wnt signaling pathway during early development. The protein is Protein CUSTOS of Bos taurus (Bovine).